Here is a 103-residue protein sequence, read N- to C-terminus: Protein SUP-1 (103 aa).

The N-terminal stretch at Met1–Ala16 is a signal peptide. The Extracellular segment spans residues Ala17–Trp75. Residues Val76–Val96 traverse the membrane as a helical segment. Residues Arg97 to Lys103 are Cytoplasmic-facing.

In terms of tissue distribution, expressed in a subset of neurons and in body wall muscles. In the nervous system, expressed specifically in cholinergic motor neurons of the ventral nerve cord, a subset of cholinergic head neurons, anterior sublateral neurons, and body sublateral neurons (at protein level).

The protein resides in the cell membrane. Its subcellular location is the perikaryon. It is found in the cell projection. It localises to the synapse. The protein localises to the cytoplasmic vesicle. The protein resides in the secretory vesicle. Its subcellular location is the synaptic vesicle. In terms of biological role, may be involved in trafficking or stabilization of the vesicular acetylcholine transporter unc-17. In Caenorhabditis elegans, this protein is Protein SUP-1.